The primary structure comprises 346 residues: Biotin synthase (346 aa).

Residues 38–256 (QQVQVSTLLS…IAVARIMMPT (219 aa)) form the Radical SAM core domain. Positions 53, 57, and 60 each coordinate [4Fe-4S] cluster. Positions 97, 128, 188, and 260 each coordinate [2Fe-2S] cluster.

Belongs to the radical SAM superfamily. Biotin synthase family. In terms of assembly, homodimer. [4Fe-4S] cluster is required as a cofactor. [2Fe-2S] cluster serves as cofactor.

The enzyme catalyses (4R,5S)-dethiobiotin + (sulfur carrier)-SH + 2 reduced [2Fe-2S]-[ferredoxin] + 2 S-adenosyl-L-methionine = (sulfur carrier)-H + biotin + 2 5'-deoxyadenosine + 2 L-methionine + 2 oxidized [2Fe-2S]-[ferredoxin]. The protein operates within cofactor biosynthesis; biotin biosynthesis; biotin from 7,8-diaminononanoate: step 2/2. Functionally, catalyzes the conversion of dethiobiotin (DTB) to biotin by the insertion of a sulfur atom into dethiobiotin via a radical-based mechanism. The chain is Biotin synthase from Salmonella agona (strain SL483).